The sequence spans 415 residues: ATP-dependent Clp protease ATP-binding subunit ClpX (415 aa).

Residues 1–54 enclose the ClpX-type ZB domain; that stretch reads MARNRMGGALICSFCNKPESSERFVVPGPGGIAICDRCVDLCESYIKSYKTVRP. C12, C15, C35, and C38 together coordinate Zn(2+). Residue 117-124 participates in ATP binding; it reads PTGSGKTL.

This sequence belongs to the ClpX chaperone family. Component of the ClpX-ClpP complex. Forms a hexameric ring that, in the presence of ATP, binds to fourteen ClpP subunits assembled into a disk-like structure with a central cavity, resembling the structure of eukaryotic proteasomes.

ATP-dependent specificity component of the Clp protease. It directs the protease to specific substrates. Can perform chaperone functions in the absence of ClpP. In Treponema denticola (strain ATCC 35405 / DSM 14222 / CIP 103919 / JCM 8153 / KCTC 15104), this protein is ATP-dependent Clp protease ATP-binding subunit ClpX.